A 296-amino-acid polypeptide reads, in one-letter code: 4-hydroxy-tetrahydrodipicolinate synthase (296 aa).

T49 lines the pyruvate pocket. Y137 functions as the Proton donor/acceptor in the catalytic mechanism. The active-site Schiff-base intermediate with substrate is K166. I208 lines the pyruvate pocket.

The protein belongs to the DapA family. In terms of assembly, homotetramer; dimer of dimers.

The protein resides in the cytoplasm. The catalysed reaction is L-aspartate 4-semialdehyde + pyruvate = (2S,4S)-4-hydroxy-2,3,4,5-tetrahydrodipicolinate + H2O + H(+). Its pathway is amino-acid biosynthesis; L-lysine biosynthesis via DAP pathway; (S)-tetrahydrodipicolinate from L-aspartate: step 3/4. In terms of biological role, catalyzes the condensation of (S)-aspartate-beta-semialdehyde [(S)-ASA] and pyruvate to 4-hydroxy-tetrahydrodipicolinate (HTPA). The protein is 4-hydroxy-tetrahydrodipicolinate synthase of Chlorobium phaeobacteroides (strain DSM 266 / SMG 266 / 2430).